The chain runs to 240 residues: uncharacterized protein (240 aa).

The segment at 3 to 27 (LKCLECDKLLSSIEMAEFHSTKTSH) adopts a C2H2-type zinc-finger fold. Disordered stretches follow at residues 21 to 43 (HSTK…RSPE) and 120 to 171 (AEIE…RFSI). Residues 120-136 (AEIERDKKRRAAERENK) show a composition bias toward basic and acidic residues. The segment covering 155-166 (SSSTCTRTPPTS) has biased composition (low complexity).

This is an uncharacterized protein from Schizosaccharomyces pombe (strain 972 / ATCC 24843) (Fission yeast).